The sequence spans 834 residues: Structure-specific endonuclease subunit SLX4 (834 aa).

Disordered stretches follow at residues 80 to 105 (RVPRNNPVTGPSKEHKQRTRSPKTTT), 272 to 307 (TVPAIPTPTESSTTEDVQGSSSKQQRVKAKKPQKGK), 332 to 372 (QNVA…GRPV), 401 to 421 (GYPEYPCDETQDTQNSPSNSA), 603 to 649 (ESKP…AKAL), and 720 to 740 (ATPNARRSRQGSSSASFSIEP). The span at 279–295 (PTESSTTEDVQGSSSKQ) shows a compositional bias: polar residues. Basic residues predominate over residues 296–305 (QRVKAKKPQK). Polar residues-rich tracts occupy residues 345–366 (SNRPSGTKHSNSGRGKSSTLKN) and 412–421 (DTQNSPSNSA). Over residues 611–630 (DDARKNGFRKENHSDVRVRP) the composition is skewed to basic and acidic residues. Low complexity predominate over residues 729 to 740 (QGSSSASFSIEP).

The protein belongs to the SLX4 family. As to quaternary structure, forms a heterodimer with SLX1. Post-translationally, phosphorylated in response to DNA damage.

The protein localises to the nucleus. In terms of biological role, regulatory subunit of the SLX1-SLX4 structure-specific endonuclease that resolves DNA secondary structures generated during DNA repair and recombination. Has endonuclease activity towards branched DNA substrates, introducing single-strand cuts in duplex DNA close to junctions with ss-DNA. The chain is Structure-specific endonuclease subunit SLX4 from Ajellomyces capsulatus (strain NAm1 / WU24) (Darling's disease fungus).